The primary structure comprises 119 residues: Small ribosomal subunit protein uS17 (119 aa).

Residues 1-21 (MAEAKTGAKATKSAAAGAADG) show a composition bias toward low complexity. The tract at residues 1–44 (MAEAKTGAKATKSAAAGAADGASKEKGPKHTPSTPKPRGRRKTR) is disordered.

It belongs to the universal ribosomal protein uS17 family. As to quaternary structure, part of the 30S ribosomal subunit.

One of the primary rRNA binding proteins, it binds specifically to the 5'-end of 16S ribosomal RNA. In Mycobacterium marinum (strain ATCC BAA-535 / M), this protein is Small ribosomal subunit protein uS17.